We begin with the raw amino-acid sequence, 373 residues long: Sensor protein DegM (373 aa).

Helical transmembrane passes span Ile-27 to Val-47, Leu-57 to Asn-77, Tyr-91 to Ile-111, and Val-122 to Phe-142. One can recognise a Histidine kinase domain in the interval Ser-170–Lys-370. His-173 carries the phosphohistidine; by autocatalysis modification.

The protein localises to the cell membrane. The catalysed reaction is ATP + protein L-histidine = ADP + protein N-phospho-L-histidine.. Involved in a sensory transduction pathway that enhances the production of minor proteases. This chain is Sensor protein DegM (degM), found in Bacillus sp. (strain B21-2).